The following is a 304-amino-acid chain: Putative metal ion transporter ZIPCO (304 aa).

The next 8 membrane-spanning stretches (helical) occupy residues 1–21, 46–66, 74–94, 158–178, 183–203, 218–238, 243–263, and 275–295; these read MWLK…VIYL, VASG…VIGL, IYCC…TDIL, FFIV…IGSL, PIII…LMIY, IYAW…VLSF, FVEI…SFNM, and FYIS…MIVF.

The protein localises to the cell membrane. Putative transporter for the divalent zinc and iron cations. Required for the development of liver-stage parasites. In Plasmodium berghei (strain Anka), this protein is Putative metal ion transporter ZIPCO.